A 217-amino-acid chain; its full sequence is Growth hormone variant (217 aa).

Residues 1–26 form the signal peptide; that stretch reads MAAGSRTSLLLAFGLLCLPWLQEGSA. 2 cysteine pairs are disulfide-bonded: Cys79/Cys191 and Cys208/Cys215. Ser132 carries the phosphoserine modification. The N-linked (GlcNAc...) asparagine glycan is linked to Asn166. The residue at position 176 (Ser176) is a Phosphoserine.

It belongs to the somatotropin/prolactin family. Expressed in the placenta.

The protein resides in the secreted. Plays an important role in growth control. Its major role in stimulating body growth is to stimulate the liver and other tissues to secrete IGF1. It stimulates both the differentiation and proliferation of myoblasts. It also stimulates amino acid uptake and protein synthesis in muscle and other tissues. The protein is Growth hormone variant (GH2) of Pan troglodytes (Chimpanzee).